Consider the following 837-residue polypeptide: Dapper homolog 2 (837 aa).

Residues Glu-65–Val-113 are a coiled coil. Disordered stretches follow at residues Ala-189–Gln-265, His-424–Ser-497, Gly-512–Gly-564, Gln-600–Arg-649, and Glu-738–Gly-782. 2 stretches are compositionally biased toward polar residues: residues Val-246 to Gln-265 and Leu-432 to Ala-445. 3 stretches are compositionally biased toward basic and acidic residues: residues Ala-456–Lys-466, Glu-486–Ser-496, and Leu-548–Leu-560. The segment covering Asp-741–Ala-759 has biased composition (polar residues). The span at Leu-768–Gly-782 shows a compositional bias: acidic residues. The short motif at Met-834 to Val-837 is the PDZ-binding element.

The protein belongs to the dapper family. Interacts with dvl2.

The protein resides in the cytoplasm. The protein localises to the late endosome. It localises to the nucleus. It is found in the cell membrane. Functionally, involved in regulation of intracellular signaling pathways during development. Specifically thought to play a role in canonical and/or non-canonical Wnt signaling pathways through interaction with DSH (Dishevelled) family proteins. Positive regulator of the Wnt signaling pathway which acts downstream of wnt1 indicative for non-canonical Wnt signaling. Also negatively regulates the Nodal signaling pathway, possibly by promoting the lysosomal degradation of Nodal receptors. Required for convergent extension movements in gastrulation. The sequence is that of Dapper homolog 2 (dact2) from Danio rerio (Zebrafish).